Consider the following 255-residue polypeptide: Geranylgeranylglyceryl phosphate synthase (255 aa).

2 residues coordinate Mg(2+): D31 and S60. Residues 179-185 (YLEAGSG), 211-212 (GG), and 233-234 (GT) each bind sn-glycerol 1-phosphate.

It belongs to the GGGP/HepGP synthase family. Group II subfamily. Mg(2+) is required as a cofactor.

The protein resides in the cytoplasm. The enzyme catalyses sn-glycerol 1-phosphate + (2E,6E,10E)-geranylgeranyl diphosphate = sn-3-O-(geranylgeranyl)glycerol 1-phosphate + diphosphate. Its pathway is membrane lipid metabolism; glycerophospholipid metabolism. In terms of biological role, prenyltransferase that catalyzes the transfer of the geranylgeranyl moiety of geranylgeranyl diphosphate (GGPP) to the C3 hydroxyl of sn-glycerol-1-phosphate (G1P). This reaction is the first ether-bond-formation step in the biosynthesis of archaeal membrane lipids. This is Geranylgeranylglyceryl phosphate synthase from Methanothrix thermoacetophila (strain DSM 6194 / JCM 14653 / NBRC 101360 / PT) (Methanosaeta thermophila).